The sequence spans 224 residues: ATP-dependent dethiobiotin synthetase BioD (224 aa).

Position 18 (T18) interacts with Mg(2+). The active site involves K39. Position 43 (S43) interacts with substrate. Mg(2+)-binding residues include D56 and E117. ATP-binding positions include D56, 117 to 120 (EGVG), and 177 to 178 (NE).

It belongs to the dethiobiotin synthetase family. Homodimer. Mg(2+) is required as a cofactor.

The protein resides in the cytoplasm. It carries out the reaction (7R,8S)-7,8-diammoniononanoate + CO2 + ATP = (4R,5S)-dethiobiotin + ADP + phosphate + 3 H(+). It participates in cofactor biosynthesis; biotin biosynthesis; biotin from 7,8-diaminononanoate: step 1/2. Functionally, catalyzes a mechanistically unusual reaction, the ATP-dependent insertion of CO2 between the N7 and N8 nitrogen atoms of 7,8-diaminopelargonic acid (DAPA, also called 7,8-diammoniononanoate) to form a ureido ring. This Xanthomonas axonopodis pv. citri (strain 306) protein is ATP-dependent dethiobiotin synthetase BioD.